Here is a 131-residue protein sequence, read N- to C-terminus: Jacalin-related lectin 15 (131 aa).

Residues 1–126 (MSTPSGSNPL…LTSLGAYFAP (126 aa)) enclose the Jacalin-type lectin domain.

The protein belongs to the jacalin lectin family. As to expression, expressed in the vascular and surrounding tissues in cotyledons. Detected in root apical meristems.

This Arabidopsis thaliana (Mouse-ear cress) protein is Jacalin-related lectin 15 (JAL15).